The chain runs to 777 residues: DISP complex protein LRCH3 (777 aa).

LRR repeat units lie at residues 56 to 79 (AAVT…AANH), 81 to 104 (LTDT…ACHF), 105 to 127 (VSLE…ILNL), 128 to 150 (QALT…LCNL), 152 to 172 (LKVL…IGHL), 173 to 195 (RHLM…IGNL), 196 to 218 (EALR…LAEL), 220 to 239 (LIRL…CYRN), 240 to 264 (LRHL…CIKG), and 266 to 290 (VHIF…DRRP). Positions 56 to 290 (AAVTGVLSLS…PDLPDYDRRP (235 aa)) are mediates interaction with DOCK7. S324, S415, and S419 each carry phosphoserine. Residues 382–648 (TAEEEEAEVR…DSTDSITGQN (267 aa)) form a mediates direct interaction with MYO6 region. The disordered stretch occupies residues 568–590 (FTPLKSDDRPNALLSSPATETVH). Phosphoserine occurs at positions 611 and 628. Positions 621 to 653 (ETNKGHASPLPPSAAPTTDSTDSITGQNSRQRE) are disordered. The segment covering 635 to 645 (APTTDSTDSIT) has biased composition (low complexity). The Calponin-homology (CH) domain occupies 652 to 765 (REEELELIDQ…VTVQALLELA (114 aa)).

As to quaternary structure, component of the DOCK7-induced septin displacement/DISP complex, at least composed of DOCK7, LRCH3 and MYO6.

It is found in the cytoplasm. In terms of biological role, as part of the DISP complex, may regulate the association of septins with actin and thereby regulate the actin cytoskeleton. This chain is DISP complex protein LRCH3, found in Homo sapiens (Human).